Consider the following 60-residue polypeptide: Potassium channel toxin MeuTXKalpha3 (60 aa).

A signal peptide spans 1-22; it reads MKNYCGIITLFLAIISATGVFC. 3 disulfides stabilise this stretch: Cys32–Cys50, Cys37–Cys55, and Cys41–Cys57. The residue at position 59 (Pro59) is a Proline amide.

The protein belongs to the short scorpion toxin superfamily. Potassium channel inhibitor family. Expressed by the venom gland.

It is found in the secreted. Functionally, may block voltage-gated potassium channels (Kv). This chain is Potassium channel toxin MeuTXKalpha3, found in Mesobuthus eupeus (Lesser Asian scorpion).